Consider the following 947-residue polypeptide: Serine-aspartate repeat-containing protein C (947 aa).

Positions 1-50 (MNNKKTATNRKGMIPNRLNKFSIRKYSVGTASILVGTTLIFGLSGHEAKA) are cleaved as a signal peptide. Residues 51–164 (AEHTNGELNQ…STTPKTTTIK (114 aa)) are disordered. A ligand binding A region region spans residues 51 to 495 (AEHTNGELNQ…GSSTANGDQK (445 aa)). Positions 56 to 71 (GELNQSKNETTAPSEN) are enriched in polar residues. The span at 72–83 (KTTKKVDSRQLK) shows a compositional bias: basic and acidic residues. Positions 84–155 (DNTQTATADQ…SNLTQAKDVS (72 aa)) are enriched in polar residues. CNA-B domains follow at residues 496–606 (KYNL…YKTP) and 607–717 (KYSL…EEET). Residues 678–927 (TQTGTNTTED…NNSNNGTLFG (250 aa)) are disordered. Composition is skewed to acidic residues over residues 685-695 (TEDDKDADGGE) and 712-886 (YYEE…DSDS). The LPXTG sorting signal signature appears at 910–914 (LPETG). Residues 912–927 (ETGSENNNSNNGTLFG) show a composition bias toward low complexity. Thr-913 carries the pentaglycyl murein peptidoglycan amidated threonine modification. The propeptide at 914-947 (GSENNNSNNGTLFGGLFAALGSLLLFGRRKKQNK) is removed by sortase.

The protein belongs to the serine-aspartate repeat-containing protein (SDr) family. In terms of assembly, homodimerizes; via N2-Domain. Interacts with host NRXN1; this interaction mediates bacterial attachment to host cells.

Its subcellular location is the secreted. The protein resides in the cell wall. Cell surface-associated calcium-binding protein which plays an important role in adhesion and pathogenesis. Mediates interactions with components of the extracellular matrix such as host NRXN1 to promote bacterial adhesion. This chain is Serine-aspartate repeat-containing protein C (sdrC), found in Staphylococcus aureus (strain USA300).